We begin with the raw amino-acid sequence, 145 residues long: 3-hydroxyacyl-[acyl-carrier-protein] dehydratase FabZ (145 aa).

The active site involves His-47.

The protein belongs to the thioester dehydratase family. FabZ subfamily.

The protein localises to the cytoplasm. The catalysed reaction is a (3R)-hydroxyacyl-[ACP] = a (2E)-enoyl-[ACP] + H2O. Functionally, involved in unsaturated fatty acids biosynthesis. Catalyzes the dehydration of short chain beta-hydroxyacyl-ACPs and long chain saturated and unsaturated beta-hydroxyacyl-ACPs. The protein is 3-hydroxyacyl-[acyl-carrier-protein] dehydratase FabZ of Thiobacillus denitrificans (strain ATCC 25259 / T1).